Reading from the N-terminus, the 554-residue chain is Glutamine--tRNA ligase (554 aa).

The 'HIGH' region motif lies at 34–44 (PEPNGYLHIGH). Residues 35-37 (EPN) and 41-47 (HIGHAKS) contribute to the ATP site. Aspartate 67 and tyrosine 212 together coordinate L-glutamine. Residues threonine 231, 261-262 (RL), and 269-271 (MSK) each bind ATP. Residues 268-272 (VMSKR) carry the 'KMSKS' region motif. The interval 317 to 324 (TKQDNTIE) is interaction with tRNA.

Belongs to the class-I aminoacyl-tRNA synthetase family. In terms of assembly, monomer.

It is found in the cytoplasm. The enzyme catalyses tRNA(Gln) + L-glutamine + ATP = L-glutaminyl-tRNA(Gln) + AMP + diphosphate. The polypeptide is Glutamine--tRNA ligase (Shigella boydii serotype 18 (strain CDC 3083-94 / BS512)).